The following is a 269-amino-acid chain: Phosphonoacetaldehyde hydrolase (269 aa).

D9 acts as the Nucleophile in catalysis. Mg(2+) is bound by residues D9 and A11. K50 functions as the Schiff-base intermediate with substrate in the catalytic mechanism. Residue D184 participates in Mg(2+) binding.

It belongs to the HAD-like hydrolase superfamily. PhnX family. As to quaternary structure, homodimer. It depends on Mg(2+) as a cofactor.

It carries out the reaction phosphonoacetaldehyde + H2O = acetaldehyde + phosphate + H(+). Involved in phosphonate degradation. This chain is Phosphonoacetaldehyde hydrolase, found in Lysinibacillus sphaericus (strain C3-41).